The primary structure comprises 1248 residues: Cullin-associated NEDD8-dissociated protein 1 (1248 aa).

HEAT repeat units lie at residues 44–82 (DESEKKVVRMVLKLLEDKNGEVQNLAVKCLGPLVNKVKE), 127–165 (PNVCQRITGKLSTAIEKEDVSVKLESLDILADLLSRFGE), 168–206 (VPFHSTILKALMPQLASSRQAVRKRTIVALSFLLIQANS), 365–403 (EDFYRSLSPALIARFKEREENVKSDIFHAYVALLKNTRL), 425–463 (IEQLPLIVKAIQPLMREKSMKTRQDCFLLLRELLNSLPG), 510–548 (HPHIPLLVPLVVTSVFDPFYKIATEALLVLQQLVKVIRP), 604–642 (QNELAVCLPIFMERLKNEVTRLSSVKALTLIAASSLRID), 644–682 (TPILHDVLPALGTFLRKNHRALKLHSLDLINKIVINYSS), 861–900 (DLSSIQVLPQTIIECFGATSEDVKAAASHALGAVSVGSLQ), 976–1014 (LVNPDELLPQLQQALRSESATMRTVVVSSVKFTISDQPQ), and 1054–1093 (PSLVRDLLPTLLPWLYSETKVKSELIREVEMGPFKHTVDD).

This sequence belongs to the CAND family.

Functionally, key assembly factor of SCF (SKP1-CUL1-F-box protein) E3 ubiquitin ligase complexes that promotes the exchange of the substrate-recognition F-box subunit in SCF complexes, thereby playing a key role in the cellular repertoire of SCF complexes. Acts as a F-box protein exchange factor. Probably plays a similar role in other cullin-RING E3 ubiquitin ligase complexes. This chain is Cullin-associated NEDD8-dissociated protein 1 (Cand1), found in Drosophila melanogaster (Fruit fly).